Reading from the N-terminus, the 261-residue chain is Pyrroline-5-carboxylate reductase (261 aa).

Belongs to the pyrroline-5-carboxylate reductase family.

Its subcellular location is the cytoplasm. It catalyses the reaction L-proline + NADP(+) = (S)-1-pyrroline-5-carboxylate + NADPH + 2 H(+). The enzyme catalyses L-proline + NAD(+) = (S)-1-pyrroline-5-carboxylate + NADH + 2 H(+). It participates in amino-acid biosynthesis; L-proline biosynthesis; L-proline from L-glutamate 5-semialdehyde: step 1/1. In terms of biological role, catalyzes the reduction of 1-pyrroline-5-carboxylate (PCA) to L-proline. The protein is Pyrroline-5-carboxylate reductase of Thermus thermophilus (strain ATCC BAA-163 / DSM 7039 / HB27).